Here is a 103-residue protein sequence, read N- to C-terminus: Large ribosomal subunit protein bL21 (103 aa).

The protein belongs to the bacterial ribosomal protein bL21 family. As to quaternary structure, part of the 50S ribosomal subunit. Contacts protein L20.

Functionally, this protein binds to 23S rRNA in the presence of protein L20. This Vibrio atlanticus (strain LGP32) (Vibrio splendidus (strain Mel32)) protein is Large ribosomal subunit protein bL21.